A 621-amino-acid polypeptide reads, in one-letter code: Kininogen-1 (621 aa).

Positions 1–18 (MKLITILFLCSRLLPSLT) are cleaved as a signal peptide. The Cystatin kininogen-type 1 domain maps to 27 to 131 (CNDQDVFKAV…IQTCLITPAE (105 aa)). Disulfide bonds link Cys27–Cys591, Cys82–Cys93, Cys106–Cys125, Cys141–Cys144, Cys205–Cys217, Cys228–Cys247, Cys263–Cys266, Cys327–Cys339, and Cys350–Cys369. Residues Asn47 and Asn87 are each glycosylated (N-linked (GlcNAc...) asparagine). Thr136 carries an O-linked (GalNAc...) threonine; partial glycan. Positions 150-253 (TKSPDLEPVL…SQKCDLYPVK (104 aa)) constitute a Cystatin kininogen-type 2 domain. N-linked (GlcNAc...) asparagine glycosylation is found at Asn168 and Asn169. A glycan (N-linked (GlcNAc...) asparagine; partial) is linked at Asn197. The N-linked (GlcNAc...) asparagine glycan is linked to Asn204. The Cystatin kininogen-type 3 domain maps to 272–375 (VDSPDLEEPL…TVNCQPLGQT (104 aa)). Ser331 is subject to Phosphoserine. Residues 396 to 497 (EGSTTVSLPH…GKNNGKHYDW (102 aa)) form a disordered region. O-linked (GalNAc...) serine glycosylation occurs at Ser398. O-linked (GalNAc...) threonine glycosylation is found at Thr399 and Thr400. Ser406 carries O-linked (GalNAc...) serine glycosylation. Residues 444 to 492 (GHKHKHDQGHGHHGSHGLGHGHQKQHGLGHGHKHGHGHGKHKNKGKNNG) are compositionally biased toward basic residues. O-linked (GalNAc...) serine glycosylation occurs at Ser512. O-linked (GalNAc...) threonine glycosylation is found at Thr520, Thr524, Thr536, Thr548, Thr553, and Thr570. A glycan (O-linked (GalNAc...) serine) is linked at Ser581.

Post-translationally, bradykinin is released from kininogen by plasma kallikrein. In terms of processing, phosphorylated by FAM20C in the extracellular medium. Bradykinin is inactivated by ACE, which removes the dipeptide Arg-Phe from its C-terminus. Plasma.

It localises to the secreted. The protein resides in the extracellular space. Kininogens are inhibitors of thiol proteases. HMW-kininogen plays an important role in blood coagulation by helping to position optimally prekallikrein and factor XI next to factor XII; HMW-kininogen inhibits the thrombin- and plasmin-induced aggregation of thrombocytes. LMW-kininogen inhibits the aggregation of thrombocytes. LMW-kininogen is in contrast to HMW-kininogen not involved in blood clotting. In terms of biological role, the active peptide bradykinin is a potent vasodilatator that is released from HMW-kininogen shows a variety of physiological effects: (A) influence in smooth muscle contraction, (B) induction of hypotension, (C) natriuresis and diuresis, (D) decrease in blood glucose level, (E) it is a mediator of inflammation and causes (E1) increase in vascular permeability, (E2) stimulation of nociceptors (4E3) release of other mediators of inflammation (e.g. prostaglandins), (F) it has a cardioprotective effect (directly via bradykinin action, indirectly via endothelium-derived relaxing factor action). The chain is Kininogen-1 (KNG1) from Bos taurus (Bovine).